The primary structure comprises 368 residues: Quinolinate synthase (368 aa).

Positions 46 and 63 each coordinate iminosuccinate. Cys-110 contributes to the [4Fe-4S] cluster binding site. Iminosuccinate contacts are provided by residues 141 to 143 and Ser-162; that span reads YVN. Position 230 (Cys-230) interacts with [4Fe-4S] cluster. Residues 256-258 and Thr-273 each bind iminosuccinate; that span reads HPE. Cys-320 is a binding site for [4Fe-4S] cluster.

This sequence belongs to the quinolinate synthase family. Type 3 subfamily. [4Fe-4S] cluster is required as a cofactor.

The protein localises to the cytoplasm. The catalysed reaction is iminosuccinate + dihydroxyacetone phosphate = quinolinate + phosphate + 2 H2O + H(+). Its pathway is cofactor biosynthesis; NAD(+) biosynthesis; quinolinate from iminoaspartate: step 1/1. Functionally, catalyzes the condensation of iminoaspartate with dihydroxyacetone phosphate to form quinolinate. This is Quinolinate synthase from Bacillus cereus (strain ZK / E33L).